Consider the following 348-residue polypeptide: Phosphoribosylformylglycinamidine cyclo-ligase (348 aa).

This sequence belongs to the AIR synthase family.

Its subcellular location is the cytoplasm. It carries out the reaction 2-formamido-N(1)-(5-O-phospho-beta-D-ribosyl)acetamidine + ATP = 5-amino-1-(5-phospho-beta-D-ribosyl)imidazole + ADP + phosphate + H(+). Its pathway is purine metabolism; IMP biosynthesis via de novo pathway; 5-amino-1-(5-phospho-D-ribosyl)imidazole from N(2)-formyl-N(1)-(5-phospho-D-ribosyl)glycinamide: step 2/2. The chain is Phosphoribosylformylglycinamidine cyclo-ligase from Roseobacter denitrificans (strain ATCC 33942 / OCh 114) (Erythrobacter sp. (strain OCh 114)).